The chain runs to 194 residues: Ion-translocating oxidoreductase complex subunit B (194 aa).

The interval 1 to 26 (MSGVLIAVAALLALAAVFGAVLGFAS) is hydrophobic. Residues 32 to 90 (EGDPIVDQIDSLLPQTQCGQCGHPGCRPYAEAIAEGEEHNRCPPGGQDTVVALSELLGR) enclose the 4Fe-4S domain. [4Fe-4S] cluster is bound by residues cysteine 49, cysteine 52, cysteine 57, cysteine 73, cysteine 116, cysteine 119, cysteine 122, cysteine 126, cysteine 146, cysteine 149, cysteine 152, and cysteine 156. 4Fe-4S ferredoxin-type domains are found at residues 107–136 (KVAYIREDECIGCTKCIQACPVDAIVGAAK) and 137–166 (LMHTVIVDECTGCDLCVEPCPVDCIDMLEV).

This sequence belongs to the 4Fe4S bacterial-type ferredoxin family. RnfB subfamily. The complex is composed of six subunits: RnfA, RnfB, RnfC, RnfD, RnfE and RnfG. Requires [4Fe-4S] cluster as cofactor.

It localises to the cell inner membrane. Its function is as follows. Part of a membrane-bound complex that couples electron transfer with translocation of ions across the membrane. The chain is Ion-translocating oxidoreductase complex subunit B from Alcanivorax borkumensis (strain ATCC 700651 / DSM 11573 / NCIMB 13689 / SK2).